We begin with the raw amino-acid sequence, 165 residues long: NADPH-dependent 7-cyano-7-deazaguanine reductase (165 aa).

C56 functions as the Thioimide intermediate in the catalytic mechanism. Catalysis depends on D63, which acts as the Proton donor. Substrate is bound by residues V78 to S80 and H97 to E98.

Belongs to the GTP cyclohydrolase I family. QueF type 1 subfamily.

It is found in the cytoplasm. It catalyses the reaction 7-aminomethyl-7-carbaguanine + 2 NADP(+) = 7-cyano-7-deazaguanine + 2 NADPH + 3 H(+). Its pathway is tRNA modification; tRNA-queuosine biosynthesis. Catalyzes the NADPH-dependent reduction of 7-cyano-7-deazaguanine (preQ0) to 7-aminomethyl-7-deazaguanine (preQ1). This is NADPH-dependent 7-cyano-7-deazaguanine reductase from Bacillus anthracis (strain A0248).